A 311-amino-acid chain; its full sequence is Olfactory receptor 10J4 (311 aa).

Over 1–29 (MPRPNFMAVTEFTFEGFSIFEWHHRLILF) the chain is Extracellular. A helical membrane pass occupies residues 30-50 (VIFLVLYVLTLASNAIILIVI). Residues 51 to 57 (RLNHQLH) lie on the Cytoplasmic side of the membrane. Residues 58–78 (TPMYFFLSVLSISETYYTVAI) form a helical membrane-spanning segment. The Extracellular segment spans residues 79–98 (NPQMLSGLLSPQQTISIPGC). A disulfide bridge connects residues Cys-98 and Cys-180. The chain crosses the membrane as a helical span at residues 99 to 119 (AAQLFFYLTFGVNKCFLLTAM). Topologically, residues 120-149 (GYDHYVAICNPLQYSVIMGKKACIQLVSGS) are cytoplasmic. Residues 150 to 170 (WNIGLSTAIIQVSSVFSLPFC) form a helical membrane-spanning segment. Over 171 to 202 (DANLISHFFCDIRPIMKLACADTTIKEFITLL) the chain is Extracellular. Residues 203 to 223 (ISLCVLVLPMVLIFISYVLIV) form a helical membrane-spanning segment. Topologically, residues 224–237 (TTILKIASAEGRRK) are cytoplasmic. Residues 238-254 (AFATCASHLTVVIVHYG) form a helical membrane-spanning segment. At 255 to 272 (RTSFIYLKPKSQNSLQDR) the chain is on the extracellular side. Residues 273-292 (LISVTYTVITPLLNPVVYSL) form a helical membrane-spanning segment. The Cytoplasmic portion of the chain corresponds to 293-311 (RNKEVKDALLRALGRKPLS).

Belongs to the G-protein coupled receptor 1 family.

It localises to the cell membrane. In terms of biological role, odorant receptor. This chain is Olfactory receptor 10J4 (OR10J4), found in Homo sapiens (Human).